A 238-amino-acid chain; its full sequence is Tyrosine recombinase XerD-like (238 aa).

The Core-binding (CB) domain maps to 1-75 (MKLPNEIEEY…SANQYFLFLY (75 aa)). Residues 90-238 (VQKKTQSSES…TITALEKYYR (149 aa)) enclose the Tyr recombinase domain. Active-site residues include Lys-154 and Arg-204. The active-site O-(3'-phospho-DNA)-tyrosine intermediate is the Tyr-236.

Belongs to the 'phage' integrase family. XerD-like subfamily.

It localises to the cytoplasm. Functionally, putative tyrosine recombinase. Not involved in the cutting and rejoining of the recombining DNA molecules on dif(SL) site. This chain is Tyrosine recombinase XerD-like, found in Lactococcus lactis subsp. cremoris (strain SK11).